Reading from the N-terminus, the 648-residue chain is MITITFPDGAVREFESGVTTFEIADSISKSLAKKALAGKFNGQLIDTTRAIEEDGSIEIITADHEDAFEVLRHSAAHLFAQAAKRLFPKLHLGVGPAIADGFYYDTDNADGQISNEDLPRIEEEMKKIVKENFPCIREEITKEEALELFKDDPYKVELINEHADDAAGLTVYRQGEFVDLCRGPHVPSTGRIQVFHLLNVAGAYWRGNSDNNMMQRVYGTAWFDKKDLKAYLTRLEEAKERDHRKLGKELDLFMISQEVGQGLPFWLPNGATIRRTLERYITDKELASGYQHVYTPPLASVELYKTSGHWEHYQEDMFPTMDMGDGEEFVLRPMNCPHHIQVYKNHVHSYRELPIRIAELGMMHRYEKSGALSGLQRVREMTLNDGHLFVMPEQIQEEFQRALQLIIDVYEDFNLTDYRFRLSYRDPKDTHKYYDNDEMWENAQSMLKAALDEMGVDYFEAEGEAAFYGPKLDIQVKTALGNEETLSTIQLDFLLPERFNLSYIGADGEEHRPVMIHRGVISTMERFTAILIETYKGAFPTWLAPRQVTVIPISNEAHIDYAWEVAKTLRDHGIRADVDDRNEKMQYKIRASQTSKIPYQLIVGDKEMQDKSVNVRRYGSKATHTEAISAFVDNILADIARKSRPAEG.

The region spanning Met1–Thr61 is the TGS domain. A catalytic region spans residues Asp242–Pro540. Zn(2+)-binding residues include Cys336, His387, and His517.

It belongs to the class-II aminoacyl-tRNA synthetase family. In terms of assembly, homodimer. The cofactor is Zn(2+).

The protein localises to the cytoplasm. It carries out the reaction tRNA(Thr) + L-threonine + ATP = L-threonyl-tRNA(Thr) + AMP + diphosphate + H(+). Functionally, catalyzes the attachment of threonine to tRNA(Thr) in a two-step reaction: L-threonine is first activated by ATP to form Thr-AMP and then transferred to the acceptor end of tRNA(Thr). Also edits incorrectly charged L-seryl-tRNA(Thr). The chain is Threonine--tRNA ligase from Streptococcus equi subsp. zooepidemicus (strain H70).